The chain runs to 103 residues: MSVLERLAATVEARKGADPDSSWTAKLLARGPEKCAEKFGEEAVEAIIEAVRGDRARLASEAADVLYHLLVMLAARDVTLAEVMAELERREGTSGIAEKAGRG.

The protein belongs to the PRA-PH family.

Its subcellular location is the cytoplasm. It catalyses the reaction 1-(5-phospho-beta-D-ribosyl)-ATP + H2O = 1-(5-phospho-beta-D-ribosyl)-5'-AMP + diphosphate + H(+). Its pathway is amino-acid biosynthesis; L-histidine biosynthesis; L-histidine from 5-phospho-alpha-D-ribose 1-diphosphate: step 2/9. This chain is Phosphoribosyl-ATP pyrophosphatase, found in Cereibacter sphaeroides (strain ATCC 17025 / ATH 2.4.3) (Rhodobacter sphaeroides).